The sequence spans 1104 residues: General transcription factor II-I repeat domain-containing protein 1 (1104 aa).

Residues Lys-27, Lys-184, Lys-212, Lys-225, Lys-238, Lys-271, Lys-337, Lys-436, Lys-439, and Lys-443 each participate in a glycyl lysine isopeptide (Lys-Gly) (interchain with G-Cter in SUMO2) cross-link. The GTF2I-like 1 repeat unit spans residues 119 to 213 (LEQCSDVYLL…PDDGGQDTKA (95 aa)). One copy of the GTF2I-like 2 repeat lies at 342–436 (IKEMEDINTL…FDERIFTGNK (95 aa)). Position 448 is a phosphoserine (Ser-448). The disordered stretch occupies residues 509–559 (SDPSPTSEEMTDSLPGHLPSEDSGYGMEMPADKGPSEEPWSEERPAEESPG). Positions 538-555 (PADKGPSEEPWSEERPAE) are enriched in basic and acidic residues. The GTF2I-like 3 repeat unit spans residues 556 to 650 (ESPGDVIRPL…ELLTDGVKEP (95 aa)). Residues Lys-567, Lys-579, Lys-588, Lys-622, Lys-638, Lys-669, Lys-709, Lys-717, Lys-757, Lys-759, and Lys-772 each participate in a glycyl lysine isopeptide (Lys-Gly) (interchain with G-Cter in SUMO2) cross-link. One copy of the GTF2I-like 4 repeat lies at 681–775 (LSRIDIANTL…FQGLIPKPET (95 aa)). A disordered region spans residues 783–802 (EAGKTTRPRRLQQDTWQPDE). The GTF2I-like 5 repeat unit spans residues 805 to 899 (ANRLGEKVIL…LQPFAEVCND (95 aa)). Residues Lys-841 and Lys-901 each participate in a glycyl lysine isopeptide (Lys-Gly) (interchain with G-Cter in SUMO2) cross-link. The stretch at 908–1002 (SNKLGKKVIL…LQPFGDVCNN (95 aa)) is one GTF2I-like 6 repeat. Disordered regions lie at residues 1001-1044 (NNAK…VAST) and 1058-1104 (LHPN…LPTR). A Nuclear localization signal motif is present at residues 1012-1019 (PKRKRKRV). Positions 1021–1043 (EGNSVSSSSSSSSSSSNPESVAS) are enriched in low complexity.

It belongs to the TFII-I family. As to quaternary structure, interacts with the retinoblastoma protein (RB1) via its C-terminus. Widely expressed.

Its subcellular location is the nucleus. Its function is as follows. May be a transcription regulator involved in cell-cycle progression and skeletal muscle differentiation. May repress GTF2I transcriptional functions, by preventing its nuclear residency, or by inhibiting its transcriptional activation. May contribute to slow-twitch fiber type specificity during myogenesis and in regenerating muscles. Binds troponin I slow-muscle fiber enhancer (USE B1). Binds specifically and with high affinity to the EFG sequences derived from the early enhancer of HOXC8. In Mus musculus (Mouse), this protein is General transcription factor II-I repeat domain-containing protein 1 (Gtf2ird1).